We begin with the raw amino-acid sequence, 797 residues long: Plakophilin-3 (797 aa).

The interval 56 to 82 is disordered; it reads QLGQQPRHNGAAEPEPEAETARGTSRG. An Omega-N-methylarginine modification is found at Arg-81. 3 positions are modified to phosphoserine: Ser-123, Ser-180, and Ser-183. At Tyr-195 the chain carries Phosphotyrosine; by SRC. 2 positions are modified to phosphoserine: Ser-238 and Ser-240. At Thr-250 the chain carries Phosphothreonine. Arg-261 carries the omega-N-methylarginine modification. The required for interaction with SFN stretch occupies residues 283–288; the sequence is SLSLSL. Residues Ser-285, Ser-313, Ser-314, and Ser-331 each carry the phosphoserine modification. Residues 294-724 are required for interaction with GSK3B; the sequence is LPDVHGFNSY…AEVLVNIIAV (431 aa). ARM repeat units lie at residues 305-348, 351-390, 393-432, 449-487, 491-536, 596-637, 645-684, and 689-730; these read SHRT…HKCY, AAAK…NLIY, ADNK…NLSS, TDLV…NLSS, ATRQ…NLSY, PKGL…NITA, VLSR…NLSR, and KDEM…NLVV. Positions 516–797 are required for binding to PKP2 mRNA; it reads AGKCEDKSVE…GYRKEDFLGP (282 aa).

This sequence belongs to the beta-catenin family. Found in a complex composed of CDH1, RAP1A and PKP3; PKP3 acts as a scaffold protein within the complex, the complex is required for CDH1 localization to mature desmosome cell junctions. Interacts with FXR1; the interaction facilitates the binding of PKP3 to PKP2 mRNA. Interacts (via ARM repeats) with GSK3B; the interaction may be involved in PKP3 protein degradation. Interacts with hyperphosphorylated and hypophosphorylated RB1; the interaction inhibits RB1 interaction with and repression of the transcription factor E2F1, potentially via sequestering RB1 to the cytoplasm. Interacts with CDKN1A; the interaction sequesters CDKN1A to the cytoplasm thereby repressing its role as an inhibitor of CDK4- and CDK6-driven RB1 phosphorylation. Interacts (via N-terminus) with SFN; the interaction maintains the cytoplasmic pool of PKP3, facilitates PKP3 exchange at desmosomes and restricts PKP3 localization to existing desmosome cell junctions. Interacts (via N-terminus) with JUP; the interaction is required for PKP3 localization to desmosome cell-cell junctions. Phosphorylated at Ser-285 when localized to the cytoplasm, PKP3 at desmosome cell junctions is not phosphorylated. Phosphorylation at Try-195 by SRC is induced by reactive oxygen species and potentially acts as a release mechanism from desmosome cell-cell junctions. As to expression, expressed in the epidermis of the skin, in squamous non-cornifying epithelial cells in the vagina, single layer epithelia of the duodenum and pancreas acini and non-epithelial dendritic reticulum cells of lymph node follicles (at protein level). In terms of tissue distribution, expressed in the oral cavity mucosa, epidermis and small intestine epithelium (at protein level). Expressed in the oral cavity mucosa and epithelial cells of the crypts and villi in the small intestine (at protein level). Expressed in the epidermis with more abundant expression found in the basal and low spinous cells (at protein level).

It is found in the nucleus. It localises to the cell junction. The protein localises to the desmosome. The protein resides in the cytoplasm. Its subcellular location is the cell membrane. It is found in the adherens junction. A component of desmosome cell-cell junctions which are required for positive regulation of cellular adhesion. Required for the localization of DSG2, DSP and PKP2 to mature desmosome junctions. May also play a role in the maintenance of DSG3 protein abundance in keratinocytes. Required for the formation of DSP-containing desmosome precursors in the cytoplasm during desmosome assembly. Also regulates the accumulation of CDH1 to mature desmosome junctions, via cAMP-dependent signaling and its interaction with activated RAP1A. Positively regulates the stabilization of PKP2 mRNA and therefore protein abundance, via its interaction with FXR1, may also regulate the protein abundance of DSP via the same mechanism. May also regulate the protein abundance of the desmosome component PKP1. Required for the organization of desmosome junctions at intercellular borders between basal keratinocytes of the epidermis, as a result plays a role in maintenance of the dermal barrier and regulation of the dermal inflammatory response. Required during epidermal keratinocyte differentiation for cell adherence at tricellular cell-cell contacts, via regulation of the timely formation of adherens junctions and desmosomes in a calcium-dependent manner, and may also play a role in the organization of the intracellular actin fiber belt. Acts as a negative regulator of the inflammatory response in hematopoietic cells of the skin and intestine, via modulation of proinflammatory cytokine production. Important for epithelial barrier maintenance in the intestine to reduce intestinal permeability, thereby plays a role in protection from intestinal-derived endotoxemia. Required for the development of hair follicles, via a role in the regulation of inner root sheaf length, correct alignment and anterior-posterior polarity of hair follicles. Promotes proliferation and cell-cycle G1/S phase transition of keratinocytes. Promotes E2F1-driven transcription of G1/S phase promoting genes by acting to release E2F1 from its inhibitory interaction with RB1, via sequestering RB1 and CDKN1A to the cytoplasm and thereby increasing CDK4- and CDK6-driven phosphorylation of RB1. May act as a scaffold protein to facilitate MAPK phosphorylation of RPS6KA protein family members and subsequently promote downstream EGFR signaling. May play a role in the positive regulation of transcription of Wnt-mediated TCF-responsive target genes. The chain is Plakophilin-3 (PKP3) from Homo sapiens (Human).